Reading from the N-terminus, the 66-residue chain is Probable cytochrome b-c1 complex subunit 9 (66 aa).

Residues 1–20 are Mitochondrial matrix-facing; that stretch reads MSNALTNIFYKYVARRNSTW. The helical transmembrane segment at 21–46 threads the bilayer; that stretch reads MAGAILGAFVLDSTVSGAVNTFFDSV. The Mitochondrial intermembrane segment spans residues 47 to 66; the sequence is NKGKLWKDVYAERVKKGISQ.

This sequence belongs to the UQCR10/QCR9 family. As to quaternary structure, component of the ubiquinol-cytochrome c oxidoreductase (cytochrome b-c1 complex, complex III, CIII), a multisubunit enzyme composed of 3 respiratory subunits cytochrome b, cytochrome c1 and Rieske protein, 2 core protein subunits, and additional low-molecular weight protein subunits. The complex exists as an obligatory dimer and forms supercomplexes (SCs) in the inner mitochondrial membrane with cytochrome c oxidase (complex IV, CIV).

The protein localises to the mitochondrion inner membrane. Its function is as follows. Component of the ubiquinol-cytochrome c oxidoreductase, a multisubunit transmembrane complex that is part of the mitochondrial electron transport chain which drives oxidative phosphorylation. The respiratory chain contains 3 multisubunit complexes succinate dehydrogenase (complex II, CII), ubiquinol-cytochrome c oxidoreductase (cytochrome b-c1 complex, complex III, CIII) and cytochrome c oxidase (complex IV, CIV), that cooperate to transfer electrons derived from NADH and succinate to molecular oxygen, creating an electrochemical gradient over the inner membrane that drives transmembrane transport and the ATP synthase. The cytochrome b-c1 complex catalyzes electron transfer from ubiquinol to cytochrome c, linking this redox reaction to translocation of protons across the mitochondrial inner membrane, with protons being carried across the membrane as hydrogens on the quinol. In the process called Q cycle, 2 protons are consumed from the matrix, 4 protons are released into the intermembrane space and 2 electrons are passed to cytochrome c. This Dictyostelium discoideum (Social amoeba) protein is Probable cytochrome b-c1 complex subunit 9.